Reading from the N-terminus, the 362-residue chain is UDP-3-O-acylglucosamine N-acyltransferase (362 aa).

His-251 functions as the Proton acceptor in the catalytic mechanism.

This sequence belongs to the transferase hexapeptide repeat family. LpxD subfamily. In terms of assembly, homotrimer.

It carries out the reaction a UDP-3-O-[(3R)-3-hydroxyacyl]-alpha-D-glucosamine + a (3R)-hydroxyacyl-[ACP] = a UDP-2-N,3-O-bis[(3R)-3-hydroxyacyl]-alpha-D-glucosamine + holo-[ACP] + H(+). The protein operates within bacterial outer membrane biogenesis; LPS lipid A biosynthesis. In terms of biological role, catalyzes the N-acylation of UDP-3-O-acylglucosamine using 3-hydroxyacyl-ACP as the acyl donor. Is involved in the biosynthesis of lipid A, a phosphorylated glycolipid that anchors the lipopolysaccharide to the outer membrane of the cell. In Cupriavidus pinatubonensis (strain JMP 134 / LMG 1197) (Cupriavidus necator (strain JMP 134)), this protein is UDP-3-O-acylglucosamine N-acyltransferase.